The chain runs to 514 residues: Double-stranded RNA-binding protein 6 (514 aa).

2 consecutive DRBM domains span residues 1-70 (MYKN…ALAR) and 87-155 (VYKN…SLRQ). 2 disordered regions span residues 195–268 (NNPH…SRFP) and 455–496 (EASQ…KDDH). Composition is skewed to polar residues over residues 216 to 225 (FPQSSHSSYS), 249 to 263 (AASQ…SPNP), and 473 to 484 (SPDSLPKTQLKT).

Binds double-stranded RNA. This chain is Double-stranded RNA-binding protein 6 (DRB6), found in Oryza sativa subsp. japonica (Rice).